The chain runs to 239 residues: Orotidine 5'-phosphate decarboxylase (239 aa).

Substrate-binding positions include Asp-15, Lys-37, 64–73, Thr-126, Arg-187, Gln-196, Gly-216, and Arg-217; that span reads DLKFHDIPNT. Lys-66 acts as the Proton donor in catalysis.

The protein belongs to the OMP decarboxylase family. Type 1 subfamily. In terms of assembly, homodimer.

The catalysed reaction is orotidine 5'-phosphate + H(+) = UMP + CO2. Its pathway is pyrimidine metabolism; UMP biosynthesis via de novo pathway; UMP from orotate: step 2/2. In terms of biological role, catalyzes the decarboxylation of orotidine 5'-monophosphate (OMP) to uridine 5'-monophosphate (UMP). The protein is Orotidine 5'-phosphate decarboxylase of Geobacter metallireducens (strain ATCC 53774 / DSM 7210 / GS-15).